The chain runs to 204 residues: DNA-binding transcriptional activator EvgA (204 aa).

The Response regulatory domain occupies 2–117 (NAIIIDDHPL…NIIAAIEAAK (116 aa)). Residue aspartate 52 is modified to 4-aspartylphosphate. Residues 137 to 202 (DQQKLDSLSK…DLYTFAQRNK (66 aa)) form the HTH luxR-type domain. The H-T-H motif DNA-binding region spans 161–180 (NNDIAEKMFISNKTVSTYKS).

As to quaternary structure, homodimer. Phosphorylated by EvgS.

It is found in the cytoplasm. In terms of biological role, member of the two-component regulatory system EvgS/EvgA. Regulates the expression of emrKY operon and yfdX. Also seems to control expression of at least one other multidrug efflux operon. The polypeptide is DNA-binding transcriptional activator EvgA (evgA) (Escherichia coli O157:H7).